The chain runs to 257 residues: Imidazole glycerol phosphate synthase subunit HisF (257 aa).

Catalysis depends on residues Asp-12 and Asp-131.

It belongs to the HisA/HisF family. As to quaternary structure, heterodimer of HisH and HisF.

Its subcellular location is the cytoplasm. The enzyme catalyses 5-[(5-phospho-1-deoxy-D-ribulos-1-ylimino)methylamino]-1-(5-phospho-beta-D-ribosyl)imidazole-4-carboxamide + L-glutamine = D-erythro-1-(imidazol-4-yl)glycerol 3-phosphate + 5-amino-1-(5-phospho-beta-D-ribosyl)imidazole-4-carboxamide + L-glutamate + H(+). Its pathway is amino-acid biosynthesis; L-histidine biosynthesis; L-histidine from 5-phospho-alpha-D-ribose 1-diphosphate: step 5/9. Its function is as follows. IGPS catalyzes the conversion of PRFAR and glutamine to IGP, AICAR and glutamate. The HisF subunit catalyzes the cyclization activity that produces IGP and AICAR from PRFAR using the ammonia provided by the HisH subunit. The polypeptide is Imidazole glycerol phosphate synthase subunit HisF (Kineococcus radiotolerans (strain ATCC BAA-149 / DSM 14245 / SRS30216)).